Here is a 232-residue protein sequence, read N- to C-terminus: Triosephosphate isomerase (232 aa).

6–8 (NFK) is a binding site for substrate. The active-site Electrophile is the His90. The Proton acceptor role is filled by Glu159. Residues Gly165 and Ser195 each contribute to the substrate site.

The protein belongs to the triosephosphate isomerase family. In terms of assembly, homodimer.

It localises to the cytoplasm. The catalysed reaction is D-glyceraldehyde 3-phosphate = dihydroxyacetone phosphate. Its pathway is carbohydrate biosynthesis; gluconeogenesis. The protein operates within carbohydrate degradation; glycolysis; D-glyceraldehyde 3-phosphate from glycerone phosphate: step 1/1. Functionally, involved in the gluconeogenesis. Catalyzes stereospecifically the conversion of dihydroxyacetone phosphate (DHAP) to D-glyceraldehyde-3-phosphate (G3P). This chain is Triosephosphate isomerase, found in Wolinella succinogenes (strain ATCC 29543 / DSM 1740 / CCUG 13145 / JCM 31913 / LMG 7466 / NCTC 11488 / FDC 602W) (Vibrio succinogenes).